A 415-amino-acid chain; its full sequence is Hydroxysteroid dehydrogenase-like protein 2 (415 aa).

Residues 17–23 (GASRGIG), Lys42, and Asp74 each bind NADP(+). Tyr168 (proton acceptor) is an active-site residue. Residue Lys172 coordinates NADP(+). One can recognise an SCP2 domain in the interval 304–412 (AGPVSEMFNT…KLEKMMAMMK (109 aa)).

It belongs to the short-chain dehydrogenases/reductases (SDR) family.

The protein localises to the peroxisome. It is found in the mitochondrion. Its function is as follows. Has apparently no steroid dehydrogenase activity. Might act as a metabolic regulator that affects systemic adaptation to nutritional cues. The protein is Hydroxysteroid dehydrogenase-like protein 2 (hsdl2) of Danio rerio (Zebrafish).